Reading from the N-terminus, the 424-residue chain is Histidinol dehydrogenase (424 aa).

NAD(+) contacts are provided by Tyr124, Gln186, and Asn209. 3 residues coordinate substrate: Ser232, Gln254, and His257. 2 residues coordinate Zn(2+): Gln254 and His257. Residues Glu322 and His323 each act as proton acceptor in the active site. Positions 323, 356, 410, and 415 each coordinate substrate. Asp356 contributes to the Zn(2+) binding site. His415 contacts Zn(2+).

This sequence belongs to the histidinol dehydrogenase family. Zn(2+) is required as a cofactor.

It catalyses the reaction L-histidinol + 2 NAD(+) + H2O = L-histidine + 2 NADH + 3 H(+). It functions in the pathway amino-acid biosynthesis; L-histidine biosynthesis; L-histidine from 5-phospho-alpha-D-ribose 1-diphosphate: step 9/9. In terms of biological role, catalyzes the sequential NAD-dependent oxidations of L-histidinol to L-histidinaldehyde and then to L-histidine. In Moorella thermoacetica (strain ATCC 39073 / JCM 9320), this protein is Histidinol dehydrogenase.